A 250-amino-acid polypeptide reads, in one-letter code: Probable phosphatase VPA1527 (250 aa).

His8, His10, His16, His41, Glu74, His102, His132, Asp194, and His196 together coordinate Zn(2+).

The protein belongs to the PHP family. Zn(2+) serves as cofactor.

The protein is Probable phosphatase VPA1527 of Vibrio parahaemolyticus serotype O3:K6 (strain RIMD 2210633).